We begin with the raw amino-acid sequence, 216 residues long: Ribosome maturation factor RimP (216 aa).

This sequence belongs to the RimP family.

The protein localises to the cytoplasm. In terms of biological role, required for maturation of 30S ribosomal subunits. The sequence is that of Ribosome maturation factor RimP from Bartonella henselae (strain ATCC 49882 / DSM 28221 / CCUG 30454 / Houston 1) (Rochalimaea henselae).